Reading from the N-terminus, the 941-residue chain is MHHKVNVKTQREVHFPMDLLQACGASAPRPVARVSRATDLDRRYRCVLSLPEERARSVGCKWSSTRAALRRGLEELGSREFRRRLRLADDCWRAICAAVCTGRKFPSFSVTDRPARARLAKVYRMGRRLLVGVVCRGESVVSDLKQECADLRRVIFEGSTRIPSSSLWGLVGVLGWTSPERAMQLTFIGRALPYGSPDVERRALASHAATLSIPAECHPNYLVAAEQFAKSWADDNLPRKFRIYPIAVQESSCMEYSRAQGGLLQSFRKGFVGYDPAAPSADPDDLELAKERGFSRIRASWYSTFRYRGELKSTNQSLEARVAVVPERGFKARIVTTHSASRVTFGHQFRRYLLQGIRRHPALVDVIGGDHRRAVETMDGDFGLLRPDGRLLSADLTSASDRIPHDLVKAILRGIFSDPDRRPPGTSLADVFDLVLGPYHLHYPDGSEVTVRQGILMGLPTTWPLLCLIHLFWVELSDWAPARPNHSRGFVLGESFRICGDDLIAWWRPERIALYNQIAVDCGAQFSAGKHLESKTWGIFTEKVFTVKPVKMKVRVRSEPSLKGYVFSRSSAFSCRMGGKGITGIRAARLYTIGAMPRWSRRIRDVYPGSLEHRTASQRYGEPVTVYRFGRWSSAIPLRWAVRAPTRTVGNPVQSLPDWFTVGPAASSVAADSNAFGAVSRVLRRMFPGLPRKLASAGIPPYLPRVFGGGGLVKSTGLTTKIGAVASRRWMSRIGHDLYRSRERKSTLGRVWTLSTSPAYAASLHEVEKFMDRPDIILTRKCRNPMLKHARELGLFEEVFESRVGGGILWASLNGKALVESHSPSILQVSRNLRRSLACPSGGFLRPSAPIGKLVQRHTLPRGTVWFLESSATDSARQGGMGLPPPPPPPLGGGGMAGPPPPPFMGLRPESSVPTSVPFTPSMFSERLAALESLFGRPPPS.

A disordered region spans residues 875–918; that stretch reads SARQGGMGLPPPPPPPLGGGGMAGPPPPPFMGLRPESSVPTSVP. Residues 905–918 show a composition bias toward low complexity; sequence MGLRPESSVPTSVP.

Forms a ribonucleoprotein complex with the 23S RNA, where a single polymerase molecule binds to a single viral RNA genome. Since the viral RNA is not encapsidated, ribonucleoprotein complex formation appears to be the strategy to survive in the host as persistent virus.

The protein localises to the host cytoplasm. It carries out the reaction RNA(n) + a ribonucleoside 5'-triphosphate = RNA(n+1) + diphosphate. Functionally, RNA-directed RNA polymerase that replicates the viral (+) and (-) genome. The chain is RNA-directed RNA polymerase from Saccharomyces 23S RNA narnavirus (ScNV-23S).